The chain runs to 362 residues: Heat-inducible transcription repressor HrcA (362 aa).

Belongs to the HrcA family.

Its function is as follows. Negative regulator of class I heat shock genes (grpE-dnaK-dnaJ and groELS operons). Prevents heat-shock induction of these operons. This Rhodopseudomonas palustris (strain ATCC BAA-98 / CGA009) protein is Heat-inducible transcription repressor HrcA.